The sequence spans 154 residues: MSNQMNTMDIKEILKYLPHRYPFLLIDRVLDYTPGVSLQAIKNVSINEPFFQGHFPIQPVMPGVLILEAMAQATGLLAFKTMSSDVPPPGVLYYFAGIDNARFRRVVEPGDQIHFDVKMIKERRGIGVFYGEAKVDGEVVCSAEIMCARREISQ.

His-54 is an active-site residue.

This sequence belongs to the thioester dehydratase family. FabZ subfamily.

Its subcellular location is the cytoplasm. The enzyme catalyses a (3R)-hydroxyacyl-[ACP] = a (2E)-enoyl-[ACP] + H2O. Involved in unsaturated fatty acids biosynthesis. Catalyzes the dehydration of short chain beta-hydroxyacyl-ACPs and long chain saturated and unsaturated beta-hydroxyacyl-ACPs. The sequence is that of 3-hydroxyacyl-[acyl-carrier-protein] dehydratase FabZ from Shewanella baltica (strain OS223).